Consider the following 1093-residue polypeptide: Non-canonical non-ribosomal peptide synthetase ascB (1093 aa).

A compositionally biased stretch (low complexity) spans 1–26 (MTVNGHHTNGVNGANGTNGHANGSNG). The interval 1-27 (MTVNGHHTNGVNGANGTNGHANGSNGI) is disordered. Residues 35–392 (EIVPFVKPQV…LSLTFAPTDN (358 aa)) are adenylation (A) domain. Positions 591-678 (DNLEQNLKSL…EIAAALTKGS (88 aa)) constitute a Carrier domain. Ser627 carries the post-translational modification O-(pantetheine 4'-phosphoryl)serine. Residues 721-971 (LTGATGSLGS…IPVDDAASTV (251 aa)) form a thioester reductase (TR) domain region.

The protein belongs to the NRP synthetase family.

The enzyme catalyses ilicicolinate B + AH2 + ATP = ilicicolin B + A + AMP + diphosphate. It functions in the pathway secondary metabolite biosynthesis; terpenoid biosynthesis. Its function is as follows. Non-canonical non-ribosomal peptide synthetase; part of the asc-1 gene cluster that mediates the biosynthesis of both ascochlorin and ascofuranone, a strong inhibitor of cyanide-insensitive alternative oxidases and a promising drug candidate against African trypanosomiasis. The first step in the pathway is performed by the non-reducing polyketide synthase ascC that produces orsellinic acid by condensing acetyl-CoA with 3 malonyl-CoA units. Orsellinic acid is then prenylated by the prenyltransferase ascA to yield ilicicolinic acid B. Ilicicolinic acid B is further reduced to ilicicolin B by the reductase ascB. The halogenase ascD then chlorinates ilicicolin B to produce ilicicolin A which is converted to ilicicolin A epoxide by the cytochrome P450 monooxygenase ascE that catalyzes stereoselective epoxidation of the terminal double bond of the prenyl group. Ilicicolin A epoxide is the last common precursor for the biosynthesis of ascofuranone and ascochlorin. The terpene cyclase ascF produces a monocyclic terpene, and the cyclization reaction is proposed to be initiated by protonation of the terminal epoxide of ilicicolin A epoxide to generate a monocyclic tertiarycation, which is followed by a series of hydride and methyl shifts with abstraction of proton, leading to the formation of the (14S,15R,19R)-trimethylcyclohexanone ring structure of ilicicolin C, which is finally reduced to ascochlorin by the dehydrogenase ascG. On the other hand, ilicicolin A epoxide is hydroxylated by the cytochrome P450 monooxygenase ascH, and the resultant product is cyclized by the terpene cyclase ascI to ascofuranol via protonation-initiated epoxide ring opening, which facilitates the 6-endo-tet cyclization to form the tetrahy-drofuran ring. Finally, ascofuranol is oxidized into ascofuranone by ascJ. The sequence is that of Non-canonical non-ribosomal peptide synthetase ascB from Acremonium egyptiacum (Oospora egyptiaca).